The sequence spans 984 residues: Probable beta-galactosidase C (984 aa).

Residues 1 to 23 form the signal peptide; the sequence is MRLLSFIYLVWLALLTGTPQVSA. Substrate contacts are provided by Y82, N127, A128, E129, and N187. E188 (proton donor) is an active-site residue. N-linked (GlcNAc...) asparagine glycosylation is present at N197. Y251 is a binding site for substrate. Cysteines 257 and 304 form a disulfide. N276 is a glycosylation site (N-linked (GlcNAc...) asparagine). E287 (nucleophile) is an active-site residue. Y353 provides a ligand contact to substrate. N-linked (GlcNAc...) asparagine glycans are attached at residues N391, N421, N434, N517, N602, N677, N715, N720, N759, and N805.

It belongs to the glycosyl hydrolase 35 family.

The protein resides in the secreted. The enzyme catalyses Hydrolysis of terminal non-reducing beta-D-galactose residues in beta-D-galactosides.. In terms of biological role, cleaves beta-linked terminal galactosyl residues from gangliosides, glycoproteins, and glycosaminoglycans. The protein is Probable beta-galactosidase C (lacC) of Aspergillus flavus (strain ATCC 200026 / FGSC A1120 / IAM 13836 / NRRL 3357 / JCM 12722 / SRRC 167).